Here is a 32-residue protein sequence, read N- to C-terminus: Potassium channel toxin alpha-KTx 10.2 (32 aa).

3 cysteine pairs are disulfide-bonded: Cys3–Cys22, Cys8–Cys12, and Cys27–Cys29. At Tyr32 the chain carries Tyrosine amide.

Belongs to the short scorpion toxin superfamily. Potassium channel inhibitor family. Alpha-KTx 10 subfamily. In terms of tissue distribution, expressed by the venom gland.

The protein resides in the secreted. Its function is as follows. Blocks Shaker B potassium-channels (Kv1.1/KCNA1 sub-family). This chain is Potassium channel toxin alpha-KTx 10.2, found in Centruroides noxius (Mexican scorpion).